Reading from the N-terminus, the 650-residue chain is Acetyl-coenzyme A synthetase (650 aa).

CoA-binding positions include 191-194, T311, and N335; that span reads RGGR. Residues 387–389, 411–416, D500, and R515 each bind ATP; these read GEP and DTWWQT. S523 contacts CoA. An ATP-binding site is contributed by R526. Residues V537, H539, and V542 each coordinate Mg(2+). R584 provides a ligand contact to CoA. Residue K609 is modified to N6-acetyllysine.

It belongs to the ATP-dependent AMP-binding enzyme family. The cofactor is Mg(2+). In terms of processing, acetylated. Deacetylation by the SIR2-homolog deacetylase activates the enzyme.

It catalyses the reaction acetate + ATP + CoA = acetyl-CoA + AMP + diphosphate. In terms of biological role, catalyzes the conversion of acetate into acetyl-CoA (AcCoA), an essential intermediate at the junction of anabolic and catabolic pathways. AcsA undergoes a two-step reaction. In the first half reaction, AcsA combines acetate with ATP to form acetyl-adenylate (AcAMP) intermediate. In the second half reaction, it can then transfer the acetyl group from AcAMP to the sulfhydryl group of CoA, forming the product AcCoA. The sequence is that of Acetyl-coenzyme A synthetase from Shewanella sp. (strain W3-18-1).